Here is a 485-residue protein sequence, read N- to C-terminus: DNA polymerase subunit gamma-2 (485 aa).

The interval 28–65 (GQPELLTERSSPKGGHVKSHAELEGNGEHPEAPGSGEG) is disordered. The residue at position 38 (Ser38) is a Phosphoserine. Residues 46–58 (SHAELEGNGEHPE) are compositionally biased toward basic and acidic residues.

As to quaternary structure, heterotrimer composed of a catalytic subunit and a homodimer of accessory subunits (POLG:POLG2).

It is found in the mitochondrion. The protein resides in the mitochondrion matrix. Its subcellular location is the mitochondrion nucleoid. Functionally, accessory subunit of DNA polymerase gamma solely responsible for replication of mitochondrial DNA (mtDNA). Acts as an allosteric regulator of the holoenzyme activities. Enhances the polymerase activity and the processivity of POLG by increasing its interactions with the DNA template. Suppresses POLG exonucleolytic proofreading especially toward homopolymeric templates bearing mismatched termini. Binds to single-stranded DNA. The protein is DNA polymerase subunit gamma-2 of Homo sapiens (Human).